The sequence spans 424 residues: CinA-like protein (424 aa).

The protein belongs to the CinA family.

The protein is CinA-like protein of Prochlorococcus marinus (strain MIT 9301).